Consider the following 225-residue polypeptide: NAD(P)H-quinone oxidoreductase subunit K, chloroplastic (225 aa).

Residues C43, C44, C108, and C139 each coordinate [4Fe-4S] cluster.

It belongs to the complex I 20 kDa subunit family. NDH is composed of at least 16 different subunits, 5 of which are encoded in the nucleus. [4Fe-4S] cluster is required as a cofactor.

Its subcellular location is the plastid. The protein resides in the chloroplast thylakoid membrane. It carries out the reaction a plastoquinone + NADH + (n+1) H(+)(in) = a plastoquinol + NAD(+) + n H(+)(out). The enzyme catalyses a plastoquinone + NADPH + (n+1) H(+)(in) = a plastoquinol + NADP(+) + n H(+)(out). Functionally, NDH shuttles electrons from NAD(P)H:plastoquinone, via FMN and iron-sulfur (Fe-S) centers, to quinones in the photosynthetic chain and possibly in a chloroplast respiratory chain. The immediate electron acceptor for the enzyme in this species is believed to be plastoquinone. Couples the redox reaction to proton translocation, and thus conserves the redox energy in a proton gradient. In Guizotia abyssinica (Niger), this protein is NAD(P)H-quinone oxidoreductase subunit K, chloroplastic.